We begin with the raw amino-acid sequence, 203 residues long: VEL1-related protein SPBPB2B2.15 (203 aa).

The N-terminal stretch at M1–A16 is a signal peptide.

This sequence belongs to the VEL1 family.

It is found in the cytoplasm. Its subcellular location is the cytosol. The protein is VEL1-related protein SPBPB2B2.15 of Schizosaccharomyces pombe (strain 972 / ATCC 24843) (Fission yeast).